Reading from the N-terminus, the 143-residue chain is Hemoglobin subunit alpha (143 aa).

Residues 2 to 143 enclose the Globin domain; sequence TLSDKDKSTV…VALALAERYR (142 aa). Histidine 60 is an O2 binding site. Position 89 (histidine 89) interacts with heme b.

Belongs to the globin family. Heterotetramer of two alpha chains and two beta chains. As to expression, red blood cells.

Functionally, involved in oxygen transport from gills to the various peripheral tissues. The protein is Hemoglobin subunit alpha (hba) of Thunnus thynnus (Atlantic bluefin tuna).